Reading from the N-terminus, the 190-residue chain is uncharacterized protein (190 aa).

To Synechocystis PCC 6803 sll1609 and slr1290.

This is an uncharacterized protein from Synechocystis sp. (strain ATCC 27184 / PCC 6803 / Kazusa).